The sequence spans 322 residues: Phthalate dioxygenase reductase (322 aa).

In terms of domain architecture, FAD-binding FR-type spans 7 to 109; sequence DGFLRLKIAS…SLPRNEFPLD (103 aa). FMN is bound by residues 56 to 57, 73 to 75, 81 to 84, Thr-125, and Phe-226; these read RT, AVK, and RGGS. Residues 239–322 enclose the 2Fe-2S ferredoxin-type domain; sequence FTVRLSRSGT…AKSAELVLDL (84 aa). Cys-273 contributes to the [2Fe-2S] cluster binding site. Ser-275 is a binding site for FMN. The [2Fe-2S] cluster site is built by Cys-278, Cys-281, and Cys-309.

This sequence belongs to the PDR/VanB family. Monomer. Requires FMN as cofactor.

Functionally, component of the electron transfer chain involved in pyridine nucleotide-dependent dihydroxylation of phthalate. Utilizes FMN to mediate electron transfer from the two-electron donor, NADH, to the one-electron acceptor, (2Fe-2S). The sequence is that of Phthalate dioxygenase reductase (ophA1) from Burkholderia cepacia (Pseudomonas cepacia).